Consider the following 451-residue polypeptide: Phosphoglucosamine mutase (451 aa).

Residue S102 is the Phosphoserine intermediate of the active site. Residues S102, D244, D246, and D248 each contribute to the Mg(2+) site. Position 102 is a phosphoserine (S102).

Belongs to the phosphohexose mutase family. Requires Mg(2+) as cofactor. In terms of processing, activated by phosphorylation.

The enzyme catalyses alpha-D-glucosamine 1-phosphate = D-glucosamine 6-phosphate. Functionally, catalyzes the conversion of glucosamine-6-phosphate to glucosamine-1-phosphate. This chain is Phosphoglucosamine mutase, found in Lawsonia intracellularis (strain PHE/MN1-00).